Consider the following 1038-residue polypeptide: Importin-7 (1038 aa).

Position 1 is an N-acetylmethionine (M1). In terms of domain architecture, Importin N-terminal spans 22–101 (AERQLNEAHK…RENIVEAIIH (80 aa)). The interval 881-910 (EHENDSDDDDEAEDDDETEELGSDEDDIDE) is disordered. Over residues 884 to 910 (NDSDDDDEAEDDDETEELGSDEDDIDE) the composition is skewed to acidic residues. A Phosphoserine modification is found at S886. Phosphothreonine is present on T898. Phosphoserine is present on residues S903 and S1020.

It belongs to the importin beta family. Forms a heterodimer with KPNB1. Interacts with histone H1. Interacts with H2A, H2B, H3 and H4 histones. Interacts with SNUPN and XPO1. Interacts with RPS7 and RPL5. Interacts with RPL23A (via BIB domain). Binds directly to nuclear pore complexes. Interacts with SMAD4 and NUP93; translocates SMAD4 to the nucleus through the NPC upon BMP7 stimulation resulting in activation of SMAD4 signaling. Interacts with phosphorylated SMAD2; the interaction facilitates translocation of SMAD2 to the nucleus. Interacts with SRP19. Interacts with RUNX2; the interaction inhibits RUNX2 nuclear translocation in osteoblasts. Interacts with HDAC6, DLX3 and KLF4; the interaction facilitates HDAC6, DLX3 and KLF4 nuclear translocation in dental papilla cells. As to quaternary structure, (Microbial infection) Interacts with HIV-1 reverse transcription complex integrase and rev.

It localises to the cytoplasm. The protein localises to the nucleus. Functionally, functions in nuclear protein import, either by acting as autonomous nuclear transport receptor or as an adapter-like protein in association with the importin-beta subunit KPNB1. Acting autonomously, is thought to serve itself as receptor for nuclear localization signals (NLS) and to promote translocation of import substrates through the nuclear pore complex (NPC) by an energy requiring, Ran-dependent mechanism. At the nucleoplasmic side of the NPC, Ran binds to importin, the importin/substrate complex dissociates and importin is re-exported from the nucleus to the cytoplasm where GTP hydrolysis releases Ran. The directionality of nuclear import is thought to be conferred by an asymmetric distribution of the GTP- and GDP-bound forms of Ran between the cytoplasm and nucleus. Mediates autonomously the nuclear import of ribosomal proteins RPL23A, RPS7 and RPL5. In association with KPNB1 mediates the nuclear import of H1 histone and the Ran-binding site of IPO7 is not required but synergizes with that of KPNB1 in importin/substrate complex dissociation. Promotes odontoblast differentiation via promoting nuclear translocation of DLX3, KLF4, SMAD2, thereby facilitating the transcription of target genes that play a role in odontoblast differentiation. Facilitates BMP4-induced translocation of SMAD1 to the nucleus and recruitment to the MSX1 gene promoter, thereby promotes the expression of the odontogenic regulator MSX1 in dental mesenchymal cells. Also promotes odontoblast differentiation by facilitating the nuclear translocation of HDAC6 and subsequent repression of RUNX2 expression. Inhibits osteoblast differentiation by inhibiting nuclear translocation of RUNX2 and therefore inhibition of RUNX2 target gene transcription. In vitro, mediates nuclear import of H2A, H2B, H3 and H4 histones. Its function is as follows. (Microbial infection) Mediates the nuclear import of HIV-1 reverse transcription complex (RTC) integrase. Binds and mediates the nuclear import of HIV-1 Rev. In Homo sapiens (Human), this protein is Importin-7 (IPO7).